The sequence spans 173 residues: Alpha-crystallin A chain (173 aa).

An N-acetylmethionine modification is found at methionine 1. Residues 1-63 (MDVTIQHPWF…RTVLDSGISE (63 aa)) form a required for complex formation with BFSP1 and BFSP2 region. Deamidated glutamine; partial is present on glutamine 6. Serine 45 bears the Phosphoserine mark. Deamidated glutamine; partial is present on glutamine 50. In terms of domain architecture, sHSP spans 52–162 (LFRTVLDSGI…GHSERAIPVS (111 aa)). The residue at position 70 (lysine 70) is an N6-acetyllysine. Glutamine 90 carries the post-translational modification Deamidated glutamine; partial. Lysine 99 carries the post-translational modification N6-acetyllysine. Histidine 100 contributes to the Zn(2+) binding site. The residue at position 101 (asparagine 101) is a Deamidated asparagine; partial. Positions 102 and 107 each coordinate Zn(2+). Serine 122 is subject to Phosphoserine. The residue at position 123 (asparagine 123) is a Deamidated asparagine; partial. Residues 145–173 (KVQSGLDAGHSERAIPVSREEKPSSAPSS) form a disordered region. Glutamine 147 bears the Deamidated glutamine; partial mark. Residues 153 to 167 (GHSERAIPVSREEKP) show a composition bias toward basic and acidic residues. Histidine 154 provides a ligand contact to Zn(2+). The O-linked (GlcNAc) serine glycan is linked to serine 162.

It belongs to the small heat shock protein (HSP20) family. As to quaternary structure, heteromer composed of three CRYAA and one CRYAB subunits. Inter-subunit bridging via zinc ions enhances stability, which is crucial as there is no protein turn over in the lens. Can also form homodimers and homotetramers (dimers of dimers) which serve as the building blocks of homooligomers. Within homooligomers, the zinc-binding motif is created from residues of 3 different molecules. His-100 and Glu-102 from one molecule are ligands of the zinc ion, and His-107 and His-154 residues from additional molecules complete the site with tetrahedral coordination geometry. Part of a complex required for lens intermediate filament formation composed of BFSP1, BFSP2 and CRYAA. Post-translationally, acetylation at Lys-70 may increase chaperone activity. Undergoes age-dependent proteolytical cleavage at the C-terminus.

The protein resides in the cytoplasm. The protein localises to the nucleus. In terms of biological role, contributes to the transparency and refractive index of the lens. Acts as a chaperone, preventing aggregation of various proteins under a wide range of stress conditions. Required for the correct formation of lens intermediate filaments as part of a complex composed of BFSP1, BFSP2 and CRYAA. This Cavia porcellus (Guinea pig) protein is Alpha-crystallin A chain (CRYAA).